Reading from the N-terminus, the 145-residue chain is D-aminoacyl-tRNA deacylase (145 aa).

A Gly-cisPro motif, important for rejection of L-amino acids motif is present at residues G137–P138.

This sequence belongs to the DTD family. Homodimer.

The protein resides in the cytoplasm. The catalysed reaction is glycyl-tRNA(Ala) + H2O = tRNA(Ala) + glycine + H(+). The enzyme catalyses a D-aminoacyl-tRNA + H2O = a tRNA + a D-alpha-amino acid + H(+). An aminoacyl-tRNA editing enzyme that deacylates mischarged D-aminoacyl-tRNAs. Also deacylates mischarged glycyl-tRNA(Ala), protecting cells against glycine mischarging by AlaRS. Acts via tRNA-based rather than protein-based catalysis; rejects L-amino acids rather than detecting D-amino acids in the active site. By recycling D-aminoacyl-tRNA to D-amino acids and free tRNA molecules, this enzyme counteracts the toxicity associated with the formation of D-aminoacyl-tRNA entities in vivo and helps enforce protein L-homochirality. This Alcanivorax borkumensis (strain ATCC 700651 / DSM 11573 / NCIMB 13689 / SK2) protein is D-aminoacyl-tRNA deacylase.